Reading from the N-terminus, the 169-residue chain is Ribosome maturation factor RimM (169 aa).

The PRC barrel domain maps to 94–168 (EEGQYYYHQI…KVIVELLEGL (75 aa)).

Belongs to the RimM family. In terms of assembly, binds ribosomal protein uS19.

It localises to the cytoplasm. Functionally, an accessory protein needed during the final step in the assembly of 30S ribosomal subunit, possibly for assembly of the head region. Essential for efficient processing of 16S rRNA. May be needed both before and after RbfA during the maturation of 16S rRNA. It has affinity for free ribosomal 30S subunits but not for 70S ribosomes. This is Ribosome maturation factor RimM from Limosilactobacillus fermentum (strain NBRC 3956 / LMG 18251) (Lactobacillus fermentum).